A 406-amino-acid polypeptide reads, in one-letter code: RILP-like protein 1 (406 aa).

The 95-residue stretch at 5 to 99 (QLGAALDKSA…LEKEKKHKKE (95 aa)) folds into the RH1 domain. Residues 105-319 (DVWRGEAQDL…KVFMLQEEIA (215 aa)) adopt a coiled-coil conformation. Disordered stretches follow at residues 234–272 (EVSSLRQEVSRLKEKLKEQSRSNEEEAQEPVGPPSPAQE) and 323–351 (SEEQEEENGPPLPDPSETLRTNPRSNFQP). Positions 241 to 257 (EVSRLKEKLKEQSRSNE) are enriched in basic and acidic residues. Positions 289 to 358 (RPRFTLQELR…FQPESGIKRL (70 aa)) constitute an RH2 domain. The segment covering 340–351 (TLRTNPRSNFQP) has biased composition (polar residues).

Belongs to the RILPL family.

Its subcellular location is the cytoplasm. The protein localises to the cytosol. It localises to the cytoskeleton. The protein resides in the microtubule organizing center. It is found in the centrosome. Its subcellular location is the cell projection. The protein localises to the cilium. Plays a role in the regulation of cell shape and polarity. Plays a role in cellular protein transport, including protein transport away from primary cilia. Neuroprotective protein. This Danio rerio (Zebrafish) protein is RILP-like protein 1 (rilpl1).